A 679-amino-acid polypeptide reads, in one-letter code: Glycine--tRNA ligase beta subunit (679 aa).

The protein belongs to the class-II aminoacyl-tRNA synthetase family. Tetramer of two alpha and two beta subunits.

It localises to the cytoplasm. It catalyses the reaction tRNA(Gly) + glycine + ATP = glycyl-tRNA(Gly) + AMP + diphosphate. The chain is Glycine--tRNA ligase beta subunit from Streptococcus agalactiae serotype Ia (strain ATCC 27591 / A909 / CDC SS700).